The following is a 249-amino-acid chain: uncharacterized protein (249 aa).

The signal sequence occupies residues 1–36 (MAKSPARRCTAKVRRVLSRSVLILCWSLLGAAPAHA). The disordered stretch occupies residues 227–249 (ARQPPGRWVCPSSAGGPIGWHRQ).

This is an uncharacterized protein from Mycobacterium tuberculosis (strain CDC 1551 / Oshkosh).